Reading from the N-terminus, the 1482-residue chain is Chromosome partition protein MukB (1482 aa).

An ATP-binding site is contributed by 34-41 (GGNGAGKS). Coiled-coil stretches lie at residues 337–418 (LNLV…QYQQ), 444–472 (LDTYQAKEQEATERLLSLEQKMSVAQTAH), 509–601 (RHLA…TSHA), 781–805 (AARESRIESLHAEREALSERYATLS), 835–1116 (EAEI…AKAG), and 1210–1265 (EAIE…LQSV). Residues 666-783 (PGGAEDARLN…SVPLFGRAAR (118 aa)) are flexible hinge. Residues 1049–1077 (ADAGAEERARQRRDELHTRLSNNRSRRNQ) are disordered. The segment covering 1051 to 1066 (AGAEERARQRRDELHT) has biased composition (basic and acidic residues).

The protein belongs to the SMC family. MukB subfamily. Homodimerization via its hinge domain. Binds to DNA via its C-terminal region. Interacts, and probably forms a ternary complex, with MukE and MukF via its C-terminal region. The complex formation is stimulated by calcium or magnesium. Interacts with tubulin-related protein FtsZ.

The protein resides in the cytoplasm. It localises to the nucleoid. Its function is as follows. Plays a central role in chromosome condensation, segregation and cell cycle progression. Functions as a homodimer, which is essential for chromosome partition. Involved in negative DNA supercoiling in vivo, and by this means organize and compact chromosomes. May achieve or facilitate chromosome segregation by condensation DNA from both sides of a centrally located replisome during cell division. In Cronobacter sakazakii (strain ATCC BAA-894) (Enterobacter sakazakii), this protein is Chromosome partition protein MukB.